The chain runs to 130 residues: Small ribosomal subunit protein uS9 (130 aa).

It belongs to the universal ribosomal protein uS9 family.

The protein is Small ribosomal subunit protein uS9 of Pseudomonas fluorescens (strain SBW25).